Reading from the N-terminus, the 362-residue chain is Methylthioribose-1-phosphate isomerase (362 aa).

Asp-252 serves as the catalytic Proton donor.

The protein belongs to the eIF-2B alpha/beta/delta subunits family. MtnA subfamily.

The protein localises to the cytoplasm. The protein resides in the nucleus. It catalyses the reaction 5-(methylsulfanyl)-alpha-D-ribose 1-phosphate = 5-(methylsulfanyl)-D-ribulose 1-phosphate. It participates in amino-acid biosynthesis; L-methionine biosynthesis via salvage pathway; L-methionine from S-methyl-5-thio-alpha-D-ribose 1-phosphate: step 1/6. In terms of biological role, catalyzes the interconversion of methylthioribose-1-phosphate (MTR-1-P) into methylthioribulose-1-phosphate (MTRu-1-P). The protein is Methylthioribose-1-phosphate isomerase of Drosophila persimilis (Fruit fly).